Reading from the N-terminus, the 129-residue chain is Lysozyme C (129 aa).

In terms of domain architecture, C-type lysozyme spans 1-129 (KVYGRCELAA…VNAWTRGCRL (129 aa)). Cystine bridges form between Cys6–Cys127, Cys30–Cys115, Cys64–Cys80, and Cys76–Cys94. Residues Glu35 and Asp52 contribute to the active site.

Belongs to the glycosyl hydrolase 22 family. As to quaternary structure, monomer.

It is found in the secreted. The catalysed reaction is Hydrolysis of (1-&gt;4)-beta-linkages between N-acetylmuramic acid and N-acetyl-D-glucosamine residues in a peptidoglycan and between N-acetyl-D-glucosamine residues in chitodextrins.. In terms of biological role, lysozymes have primarily a bacteriolytic function; those in tissues and body fluids are associated with the monocyte-macrophage system and enhance the activity of immunoagents. The protein is Lysozyme C (LYZ) of Syrmaticus soemmerringii (Copper pheasant).